Consider the following 198-residue polypeptide: LexA repressor (198 aa).

Residues isoleucine 28–leucine 47 constitute a DNA-binding region (H-T-H motif). Active-site for autocatalytic cleavage activity residues include serine 120 and lysine 157.

This sequence belongs to the peptidase S24 family. Homodimer.

It catalyses the reaction Hydrolysis of Ala-|-Gly bond in repressor LexA.. In terms of biological role, represses a number of genes involved in the response to DNA damage (SOS response), including recA and lexA. In the presence of single-stranded DNA, RecA interacts with LexA causing an autocatalytic cleavage which disrupts the DNA-binding part of LexA, leading to derepression of the SOS regulon and eventually DNA repair. The protein is LexA repressor of Thermosipho africanus (strain TCF52B).